Here is a 253-residue protein sequence, read N- to C-terminus: Methionine aminopeptidase (253 aa).

His78 lines the substrate pocket. Asp95, Asp106, and His169 together coordinate a divalent metal cation. His176 is a binding site for substrate. Residues Glu206 and Glu237 each contribute to the a divalent metal cation site.

It belongs to the peptidase M24A family. Methionine aminopeptidase type 1 subfamily. In terms of assembly, monomer. Co(2+) is required as a cofactor. Requires Zn(2+) as cofactor. Mn(2+) serves as cofactor. It depends on Fe(2+) as a cofactor.

The enzyme catalyses Release of N-terminal amino acids, preferentially methionine, from peptides and arylamides.. Its function is as follows. Removes the N-terminal methionine from nascent proteins. The N-terminal methionine is often cleaved when the second residue in the primary sequence is small and uncharged (Met-Ala-, Cys, Gly, Pro, Ser, Thr, or Val). Requires deformylation of the N(alpha)-formylated initiator methionine before it can be hydrolyzed. This chain is Methionine aminopeptidase, found in Helicobacter pylori (strain ATCC 700392 / 26695) (Campylobacter pylori).